A 239-amino-acid polypeptide reads, in one-letter code: Probable 2-phosphosulfolactate phosphatase (239 aa).

It belongs to the ComB family. Mg(2+) is required as a cofactor.

The enzyme catalyses (2R)-O-phospho-3-sulfolactate + H2O = (2R)-3-sulfolactate + phosphate. The sequence is that of Probable 2-phosphosulfolactate phosphatase from Clostridium botulinum (strain 657 / Type Ba4).